The sequence spans 235 residues: Uridylate kinase (235 aa).

9–12 (KLSG) contributes to the ATP binding site. Gly51 is a UMP binding site. 2 residues coordinate ATP: Gly52 and Arg56. Residues Asp71 and 132 to 139 (TGNPYFTT) contribute to the UMP site. The ATP site is built by Thr159, Tyr165, and Asp168.

This sequence belongs to the UMP kinase family. Homohexamer.

It is found in the cytoplasm. It catalyses the reaction UMP + ATP = UDP + ADP. It participates in pyrimidine metabolism; CTP biosynthesis via de novo pathway; UDP from UMP (UMPK route): step 1/1. Its activity is regulated as follows. Inhibited by UTP. Its function is as follows. Catalyzes the reversible phosphorylation of UMP to UDP. This Cytophaga hutchinsonii (strain ATCC 33406 / DSM 1761 / CIP 103989 / NBRC 15051 / NCIMB 9469 / D465) protein is Uridylate kinase.